Consider the following 281-residue polypeptide: MSQTSTLKGQCIAEFLGTGLLIFFGVGCVAALKVAGASFGQWEISVIWGLGVAMAIYLTAGVSGAHLNPAVTIALWLFACFDKRKVIPFIVSQVAGAFCAAALVYGLYYNLFFDFEQTHHIVRGSVESVDLAGTFSTYPNPHINFVQAFAVEMVITAILMGLILALTDDGNGVPRGPLAPLLIGLLIAVIGASMGPLTGFAMNPARDFGPKVFAWLAGWGNVAFTGGRDIPYFLVPLFGPIVGAIVGAFAYRKLIGRHLPCDICVVEEKETTTPSEQKASL.

Topologically, residues Met1–Ser5 are cytoplasmic. A helical membrane pass occupies residues Thr6–Val34. The Periplasmic portion of the chain corresponds to Ala35–Phe39. The chain crosses the membrane as a helical span at residues Gly40–Ala60. The Cytoplasmic segment spans residues Gly61–Ser63. The stretch at Gly64 to Leu67 is an intramembrane region. Positions Asn68–Ala70 match the NPA 1 motif. The helical intramembrane region spans Asn68 to Phe78. The Cytoplasmic portion of the chain corresponds to Ala79–Arg84. Residues Lys85 to Tyr108 traverse the membrane as a helical segment. Residues Tyr109 to Ile143 lie on the Periplasmic side of the membrane. A helical membrane pass occupies residues Asn144–Asp169. Topologically, residues Gly170–Pro177 are cytoplasmic. Residues Leu178–Met194 traverse the membrane as a helical segment. The Periplasmic segment spans residues Gly195 to Thr198. The stretch at Gly199–Met202 is an intramembrane region. The NPA 2 motif lies at Asn203 to Ala205. Positions Asn203–Leu216 form an intramembrane region, helical. Topologically, residues Ala217 to Pro231 are periplasmic. Residues Tyr232–Leu254 form a helical membrane-spanning segment. At Ile255–Leu281 the chain is on the cytoplasmic side.

It belongs to the MIP/aquaporin (TC 1.A.8) family. In terms of assembly, homotetramer.

Its subcellular location is the cell inner membrane. The enzyme catalyses glycerol(in) = glycerol(out). In terms of biological role, mediates glycerol diffusion across the cytoplasmic membrane via a pore-type mechanism. The sequence is that of Glycerol uptake facilitator protein (glpF) from Escherichia coli O157:H7.